Reading from the N-terminus, the 186-residue chain is Tumor necrosis factor alpha-induced protein 8-like protein 1 (186 aa).

This sequence belongs to the TNFAIP8 family. In terms of assembly, interacts with FBXW5; TNFAIP8L1 competes with TSC2 to bind FBXW5 increasing TSC2 stability by preventing its ubiquitination. In terms of tissue distribution, detected in wide variety tissues, such as neurons in brain, hepatocytes, germ cells of female and male reproductive organs, muscular tissues and variety types of cells of the epithelial origin (at protein level).

It localises to the cytoplasm. Acts as a negative regulator of mTOR activity. The sequence is that of Tumor necrosis factor alpha-induced protein 8-like protein 1 (Tnfaip8l1) from Mus musculus (Mouse).